Reading from the N-terminus, the 223-residue chain is Sigma non-opioid intracellular receptor 1 (223 aa).

Topologically, residues 1–9 (MQWAVGRRW) are lumenal. Residues 2 to 8 (QWAVGRR) are targeting to endoplasmic reticulum-associated lipid droplets. The chain crosses the membrane as a helical span at residues 10–30 (LWVALFLAAVAVLTQIVWLWL). Residues 31–223 (GTQNFVFQRE…LTTYLFGQDP (193 aa)) are Cytoplasmic-facing. The important for ligand-binding stretch occupies residues 99-106 (SLSEYVLL). A C-terminal hydrophobic region region spans residues 177-223 (VIPSTLGFALADTVFSTQDFLTLFYTLRVYARALQLELTTYLFGQDP).

Belongs to the ERG2 family. As to quaternary structure, homotrimer. Forms a ternary complex with ANK2 and ITPR3. The complex is disrupted by agonists. Interacts with KCNA4. Interacts with KCNA2; cocaine consumption leads to increased interaction. Interacts with RNF112 in an oxidative stress-regulated manner. As to expression, ubiquitously expressed with higher expression in liver, kidney and steroid-producing tissues such as placenta, ovary and adrenal gland.

It is found in the nucleus inner membrane. Its subcellular location is the nucleus outer membrane. The protein localises to the nucleus envelope. The protein resides in the cytoplasmic vesicle. It localises to the endoplasmic reticulum membrane. It is found in the membrane. Its subcellular location is the lipid droplet. The protein localises to the cell junction. The protein resides in the cell membrane. It localises to the cell projection. It is found in the growth cone. Its subcellular location is the postsynaptic density membrane. Functionally, functions in lipid transport from the endoplasmic reticulum and is involved in a wide array of cellular functions probably through regulation of the biogenesis of lipid microdomains at the plasma membrane. Involved in the regulation of different receptors it plays a role in BDNF signaling and EGF signaling. Also regulates ion channels like the potassium channel and could modulate neurotransmitter release. Plays a role in calcium signaling through modulation together with ANK2 of the ITP3R-dependent calcium efflux at the endoplasmic reticulum. Plays a role in several other cell functions including proliferation, survival and death. Originally identified for its ability to bind various psychoactive drugs it is involved in learning processes, memory and mood alteration. Necessary for proper mitochondrial axonal transport in motor neurons, in particular the retrograde movement of mitochondria. Plays a role in protecting cells against oxidative stress-induced cell death via its interaction with RNF112. The polypeptide is Sigma non-opioid intracellular receptor 1 (SIGMAR1) (Cavia porcellus (Guinea pig)).